The chain runs to 376 residues: PCM7-4 (376 aa).

In terms of biological role, has antibacterial activity against Listeria monocytogenes. This Bacillus velezensis protein is PCM7-4.